Reading from the N-terminus, the 552-residue chain is Glutamine-dependent NAD(+) synthetase (552 aa).

The CN hydrolase domain occupies 5 to 245 (FRITLAQLNP…EAVVHVDLER (241 aa)). E45 serves as the catalytic Proton acceptor; for glutaminase activity. The For glutaminase activity role is filled by K113. C149 (nucleophile; for glutaminase activity) is an active-site residue. L-glutamine contacts are provided by S175 and K181. The interval 275-552 (LQDYLRKSGF…PMVNRWRDQS (278 aa)) is ligase. 290–297 (GLSGGIDS) is a binding site for ATP. A deamido-NAD(+)-binding site is contributed by N373. T397 provides a ligand contact to ATP. 2 residues coordinate deamido-NAD(+): E402 and K521.

The protein in the C-terminal section; belongs to the NAD synthetase family.

The enzyme catalyses deamido-NAD(+) + L-glutamine + ATP + H2O = L-glutamate + AMP + diphosphate + NAD(+) + H(+). Its pathway is cofactor biosynthesis; NAD(+) biosynthesis; NAD(+) from deamido-NAD(+) (L-Gln route): step 1/1. Catalyzes the ATP-dependent amidation of deamido-NAD to form NAD. Uses L-glutamine as a nitrogen source. The polypeptide is Glutamine-dependent NAD(+) synthetase (Rhodobacter capsulatus (Rhodopseudomonas capsulata)).